The following is a 374-amino-acid chain: Quinolinate synthase (374 aa).

Histidine 53 and serine 70 together coordinate iminosuccinate. Residue cysteine 116 coordinates [4Fe-4S] cluster. Residues tyrosine 148–asparagine 150 and serine 169 each bind iminosuccinate. Residue cysteine 236 coordinates [4Fe-4S] cluster. Iminosuccinate is bound by residues histidine 262–glutamate 264 and threonine 279. Cysteine 327 is a binding site for [4Fe-4S] cluster.

Belongs to the quinolinate synthase family. Type 3 subfamily. [4Fe-4S] cluster serves as cofactor.

The protein localises to the cytoplasm. It catalyses the reaction iminosuccinate + dihydroxyacetone phosphate = quinolinate + phosphate + 2 H2O + H(+). The protein operates within cofactor biosynthesis; NAD(+) biosynthesis; quinolinate from iminoaspartate: step 1/1. Catalyzes the condensation of iminoaspartate with dihydroxyacetone phosphate to form quinolinate. This chain is Quinolinate synthase, found in Haloarcula marismortui (strain ATCC 43049 / DSM 3752 / JCM 8966 / VKM B-1809) (Halobacterium marismortui).